We begin with the raw amino-acid sequence, 428 residues long: Probable pectin lyase F (428 aa).

A signal peptide spans 1–20 (MVLLHPLLTAAALLGASARA). An intrachain disulfide couples Cys-83 to Cys-107. Arg-257 is a catalytic residue. Asn-276 carries N-linked (GlcNAc...) asparagine glycosylation. Cys-324 and Cys-332 are disulfide-bonded. Positions 383 to 428 (GSGGSGAASSSVSITPSPTSSAIPSSSATPSSSAYARRHYARHHHY) are disordered. Low complexity predominate over residues 389–417 (AASSSVSITPSPTSSAIPSSSATPSSSAY). Residues 418–428 (ARRHYARHHHY) show a composition bias toward basic residues.

This sequence belongs to the polysaccharide lyase 1 family.

The protein resides in the secreted. It carries out the reaction Eliminative cleavage of (1-&gt;4)-alpha-D-galacturonan methyl ester to give oligosaccharides with 4-deoxy-6-O-methyl-alpha-D-galact-4-enuronosyl groups at their non-reducing ends.. Functionally, pectinolytic enzymes consist of four classes of enzymes: pectin lyase, polygalacturonase, pectin methylesterase and rhamnogalacturonase. Among pectinolytic enzymes, pectin lyase is the most important in depolymerization of pectin, since it cleaves internal glycosidic bonds of highly methylated pectins. The polypeptide is Probable pectin lyase F (pelF) (Aspergillus oryzae (strain ATCC 42149 / RIB 40) (Yellow koji mold)).